The sequence spans 1028 residues: Contactin-6 (1028 aa).

An N-terminal signal peptide occupies residues 1–19 (MRLLWKLVILLPLINSCAG). 6 Ig-like C2-type domains span residues 32–117 (PQDV…AKLQ), 122–208 (EDFE…RSVQ), 227–308 (PKIE…RNLA), 318–402 (PEWE…AELR), 408–502 (PDFS…RTII), and 500–587 (TIIT…ERLS). 6 disulfide bridges follow: Cys50–Cys100, Cys144–Cys196, Cys249–Cys297, Cys339–Cys386, Cys431–Cys479, and Cys521–Cys577. Residues Asn65 and Asn193 are each glycosylated (N-linked (GlcNAc...) asparagine). N-linked (GlcNAc...) asparagine glycans are attached at residues Asn368, Asn377, and Asn468. 4 consecutive Fibronectin type-III domains span residues 600-698 (PPED…TKAS), 703-800 (APGN…SGED), 805-901 (APRG…TKKS), and 902-996 (PPSQ…KMSS). Residues Asn659, Asn765, Asn860, and Asn865 are each glycosylated (N-linked (GlcNAc...) asparagine). Position 882 is a phosphotyrosine (Tyr882). N-linked (GlcNAc...) asparagine glycans are attached at residues Asn895, Asn931, Asn956, and Asn957. Ser999 is lipidated: GPI-anchor amidated serine. Residues 1000 to 1028 (TGVQISKPSTQSLSMVGVFYCFAIHPLSR) constitute a propeptide, removed in mature form.

This sequence belongs to the immunoglobulin superfamily. Contactin family. Interacts with PTPRG. In terms of tissue distribution, expressed in brain. In brain, it is preferentially expressed in the accessory olfactory bulb, layers II/III and V of the cerebral cortex, piriform cortex, anterior thalamic nuclei, locus coeruleus of the pons and mesencephalic trigeminal nucleus and in Purkinje cells of the cerebellum.

The protein resides in the cell membrane. In terms of biological role, contactins mediate cell surface interactions during nervous system development. Participates in oligodendrocytes generation by acting as a ligand of NOTCH1. Its association with NOTCH1 promotes NOTCH1 activation through the released notch intracellular domain (NICD) and subsequent translocation to the nucleus. Involved in motor coordination. In Mus musculus (Mouse), this protein is Contactin-6 (Cntn6).